Reading from the N-terminus, the 374-residue chain is Probable trehalose-phosphate phosphatase 9 (374 aa).

Belongs to the trehalose phosphatase family. Requires a divalent metal cation as cofactor.

It carries out the reaction alpha,alpha-trehalose 6-phosphate + H2O = alpha,alpha-trehalose + phosphate. Its pathway is glycan biosynthesis; trehalose biosynthesis. In terms of biological role, removes the phosphate from trehalose 6-phosphate to produce free trehalose. Trehalose accumulation in plant may improve abiotic stress tolerance. The polypeptide is Probable trehalose-phosphate phosphatase 9 (TPP9) (Oryza sativa subsp. japonica (Rice)).